Here is a 1141-residue protein sequence, read N- to C-terminus: Isoleucine--tRNA ligase (1141 aa).

Residues 50–60 (PSANGMPGIHH) carry the 'HIGH' region motif. Positions 689–693 (KMSKR) match the 'KMSKS' region motif. K692 serves as a coordination point for ATP.

It belongs to the class-I aminoacyl-tRNA synthetase family. IleS type 2 subfamily. Monomer. Zn(2+) serves as cofactor.

Its subcellular location is the cytoplasm. It carries out the reaction tRNA(Ile) + L-isoleucine + ATP = L-isoleucyl-tRNA(Ile) + AMP + diphosphate. In terms of biological role, catalyzes the attachment of isoleucine to tRNA(Ile). As IleRS can inadvertently accommodate and process structurally similar amino acids such as valine, to avoid such errors it has two additional distinct tRNA(Ile)-dependent editing activities. One activity is designated as 'pretransfer' editing and involves the hydrolysis of activated Val-AMP. The other activity is designated 'posttransfer' editing and involves deacylation of mischarged Val-tRNA(Ile). This chain is Isoleucine--tRNA ligase, found in Bacteroides fragilis (strain YCH46).